Here is an 88-residue protein sequence, read N- to C-terminus: MSESIERNRRHVYQGRVVSDKMDKTIVVVVDTYKNHPVYSKRTRYSKKYYAMDENNEAKVGDIVRIMETRPLSRTKRFRLVDIVKKSV.

Belongs to the universal ribosomal protein uS17 family. In terms of assembly, part of the 30S ribosomal subunit.

In terms of biological role, one of the primary rRNA binding proteins, it binds specifically to the 5'-end of 16S ribosomal RNA. This chain is Small ribosomal subunit protein uS17, found in Lactobacillus delbrueckii subsp. bulgaricus (strain ATCC 11842 / DSM 20081 / BCRC 10696 / JCM 1002 / NBRC 13953 / NCIMB 11778 / NCTC 12712 / WDCM 00102 / Lb 14).